A 516-amino-acid polypeptide reads, in one-letter code: High-affinity nitrate transporter 2.3 (516 aa).

A run of 12 helical transmembrane segments spans residues 52–72 (WFSFFCCFVSTFAAPPLLPLI), 76–96 (LGLTATDIGNAGIASVSGAVF), 112–132 (LASASLILLTTPAVYCSSIIQ), 142–162 (FFTGISLASFVSAQFWMSSMF), 172–192 (GVAGGWGNLGGGAVQLLMPLV), 209–229 (IAFFIPGLMQTFSAIAVLAFG), 265–285 (WILALTYGYSFGVELTIDNVV), 299–319 (TAGLIAASFGMANIISRPGGG), 335–354 (LWGLWTVQTIGGVLCVVLGI), 367–387 (VLFSFFVQAACGLTFGIVPFV), 395–415 (ISGMTGGGGNVGAVLTQYIFF), and 425–445 (GIKYMGLMIIACTLPVMLIYF). The segment at 489–516 (SVREGGRSSANGGQPRHTVPVDASPAGV) is disordered.

The protein belongs to the major facilitator superfamily. Nitrate/nitrite porter (TC 2.A.1.8) family. In terms of assembly, heterotetramer composed of two NRT2.3 and two NAR2.1. Isoform 1 interacts with NAR2.1, but not isoform 2. As to expression, expressed in the stelar cells of both primary and lateral roots, particularly at the site of lateral root emergence, root-shoot junction zone, vascular tissues of adventitious root primordia, leaves, germ tips and seed scutellum.

The protein localises to the cell membrane. Its function is as follows. Involved in nitrate transport, but does not seem to be able to mediate transport by its own. Acts as a dual component transporter with NAR2.1. Imports nitrate with high affinity when expressed with NAR2.1 in a heterologous system (Xenopus oocytes). Plays a key role in long-distance nitrate transport from root to shoot particularly at low external nitrate supply. The protein is High-affinity nitrate transporter 2.3 (NRT2.3) of Oryza sativa subsp. japonica (Rice).